Consider the following 264-residue polypeptide: MSDLLSALLLGILEGLTEFLPISSTGHLLIAQHWLGARSDFFNIVIQAGAIVAVVLVFRQRLLQLATGFGQRENREYVFKLGAAFLVTAVVGLVVRKAGWSLPETVSPVAWALIIGGIWMLLVEAYTARLPDRDQVTWTVAIGVGLAQVVAGVFPGTSRSASAIFLAMLLGLSRRAAAAEFVFLVGIPTMFAASAYTFLEMAKAGQLGSENWTEVGVAFLAAAVTGFVVVKWLMGYIKSHKFTAFALYRIALGAALLLWLPSGS.

The next 7 membrane-spanning stretches (helical) occupy residues 38 to 58 (RSDF…VLVF), 75 to 95 (REYV…GLVV), 106 to 126 (VSPV…VEAY), 136 to 156 (VTWT…VFPG), 181 to 201 (FVFL…FLEM), 217 to 237 (VAFL…MGYI), and 242 to 262 (FTAF…WLPS).

The protein belongs to the UppP family.

It localises to the cell inner membrane. It carries out the reaction di-trans,octa-cis-undecaprenyl diphosphate + H2O = di-trans,octa-cis-undecaprenyl phosphate + phosphate + H(+). In terms of biological role, catalyzes the dephosphorylation of undecaprenyl diphosphate (UPP). Confers resistance to bacitracin. The polypeptide is Undecaprenyl-diphosphatase (Stenotrophomonas maltophilia (strain R551-3)).